We begin with the raw amino-acid sequence, 425 residues long: Pectate lyase L (425 aa).

The N-terminal stretch at M1–A25 is a signal peptide. A disulfide bridge links C28 with C114. Ca(2+)-binding residues include D209, D233, D234, and D237. K273 (proton acceptor) is an active-site residue. Ca(2+)-binding residues include N402, S413, A416, D418, and E423.

Belongs to the polysaccharide lyase 9 family. Requires Ca(2+) as cofactor.

It is found in the secreted. The catalysed reaction is Eliminative cleavage of (1-&gt;4)-alpha-D-galacturonan to give oligosaccharides with 4-deoxy-alpha-D-galact-4-enuronosyl groups at their non-reducing ends.. The protein operates within glycan metabolism; pectin degradation; 2-dehydro-3-deoxy-D-gluconate from pectin: step 2/5. Functionally, presents an endo-cleaving activity on polygalacturonate or partially methylated pectin. The sequence is that of Pectate lyase L (pelL) from Dickeya chrysanthemi (Pectobacterium chrysanthemi).